Consider the following 359-residue polypeptide: 4-hydroxy-3-methylbut-2-en-1-yl diphosphate synthase (flavodoxin) (359 aa).

Residues Cys-265, Cys-268, Cys-300, and Glu-307 each contribute to the [4Fe-4S] cluster site.

This sequence belongs to the IspG family. Requires [4Fe-4S] cluster as cofactor.

The catalysed reaction is (2E)-4-hydroxy-3-methylbut-2-enyl diphosphate + oxidized [flavodoxin] + H2O + 2 H(+) = 2-C-methyl-D-erythritol 2,4-cyclic diphosphate + reduced [flavodoxin]. The protein operates within isoprenoid biosynthesis; isopentenyl diphosphate biosynthesis via DXP pathway; isopentenyl diphosphate from 1-deoxy-D-xylulose 5-phosphate: step 5/6. Functionally, converts 2C-methyl-D-erythritol 2,4-cyclodiphosphate (ME-2,4cPP) into 1-hydroxy-2-methyl-2-(E)-butenyl 4-diphosphate. The polypeptide is 4-hydroxy-3-methylbut-2-en-1-yl diphosphate synthase (flavodoxin) (Lawsonia intracellularis (strain PHE/MN1-00)).